The sequence spans 118 residues: UPF0102 protein NE0711 (118 aa).

The protein belongs to the UPF0102 family.

The protein is UPF0102 protein NE0711 of Nitrosomonas europaea (strain ATCC 19718 / CIP 103999 / KCTC 2705 / NBRC 14298).